Here is a 309-residue protein sequence, read N- to C-terminus: Homoserine kinase (309 aa).

Residue 91–101 coordinates ATP; that stretch reads PIGSGLGSSAC.

It belongs to the GHMP kinase family. Homoserine kinase subfamily.

It is found in the cytoplasm. It carries out the reaction L-homoserine + ATP = O-phospho-L-homoserine + ADP + H(+). Its pathway is amino-acid biosynthesis; L-threonine biosynthesis; L-threonine from L-aspartate: step 4/5. Functionally, catalyzes the ATP-dependent phosphorylation of L-homoserine to L-homoserine phosphate. The protein is Homoserine kinase of Yersinia enterocolitica serotype O:8 / biotype 1B (strain NCTC 13174 / 8081).